Reading from the N-terminus, the 100-residue chain is Urease subunit gamma (100 aa).

Belongs to the urease gamma subunit family. In terms of assembly, heterotrimer of UreA (gamma), UreB (beta) and UreC (alpha) subunits. Three heterotrimers associate to form the active enzyme.

The protein resides in the cytoplasm. It catalyses the reaction urea + 2 H2O + H(+) = hydrogencarbonate + 2 NH4(+). The protein operates within nitrogen metabolism; urea degradation; CO(2) and NH(3) from urea (urease route): step 1/1. The protein is Urease subunit gamma of Roseobacter denitrificans (strain ATCC 33942 / OCh 114) (Erythrobacter sp. (strain OCh 114)).